The sequence spans 473 residues: DNA-binding protein (473 aa).

Disordered stretches follow at residues 1-69 (MAGR…GFSH) and 85-111 (RRLE…SKAV). A compositionally biased stretch (polar residues) spans 7–18 (ELPTITPYLQET). A compositionally biased stretch (acidic residues) spans 53 to 62 (PDSEEEEEEV). Position 141 is a phosphotyrosine; by host (Y141). C230 and H232 together coordinate Zn(2+). Residues 243 to 277 (VEMDVASENAQRALKEHPSRAKVVQNRWGRSVVQL) form a flexible loop region. Residues C285, C301, C342, C344, C396, and C412 each contribute to the Zn(2+) site. The tract at residues 459–473 (VALPASHGDGEKEPF) is C-terminal arm, DBP binding.

The protein belongs to the adenoviridae E2A DNA-binding protein family. Homomultimerizes on viral ssDNA bound to pTP. Forms a initiation complex with viral polymerase, pTP and hosts NFIA and POU2F1/OCT1. Interacts with host SRCAP.

The protein localises to the host nucleus. Plays a role in the elongation phase of viral strand displacement replication by unwinding the template in an ATP-independent fashion, employing its capacity to form multimers. Also enhances the rate of initiation. Released from template upon second strand synthesis. Assembles in complex with viral pTP, viral pol, host NFIA and host POU2F1/OCT1 on viral origin of replication. Covers the whole ssDNA genome during synthesis. The complementary strand synthesis induces its relese from DNA template. May inhibit cellular transcription mediated by the interaction between host SRCAP and CBP. This Homo sapiens (Human) protein is DNA-binding protein.